The primary structure comprises 49 residues: uncharacterized protein (49 aa).

A helical transmembrane segment spans residues L20–I42.

It localises to the membrane. This is an uncharacterized protein from Dictyostelium discoideum (Social amoeba).